The primary structure comprises 312 residues: Calcium-independent mitochondrial carrier protein SCaMC-3L (312 aa).

Solcar repeat units follow at residues 27 to 113 (GTLW…SRNF), 121 to 206 (PSFQ…LRCL), and 217 to 304 (PSGL…MKKT). Helical transmembrane passes span 33 to 50 (LLSGAMAGAVSRTGTAPL), 88 to 107 (GNGINVLKIAPEYAIKFSVF), 131 to 144 (SLAVAISQTLINPM), 182 to 200 (YLPNMLGIIPYACTDLAVY), 219 to 243 (GLVSLSSVTLSTTCGQMASYPLTLV), and 279 to 298 (GMTPTLLKVLPAGGISYLVY).

This sequence belongs to the mitochondrial carrier (TC 2.A.29) family. As to expression, mainly expressed in testis and at lesser levels in brain.

Its subcellular location is the mitochondrion inner membrane. It carries out the reaction Mg(2+)(out) + phosphate(in) + ATP(out) = Mg(2+)(in) + phosphate(out) + ATP(in). It catalyses the reaction ADP(out) + phosphate(in) + H(+)(out) = ADP(in) + phosphate(out) + H(+)(in). Functionally, calcium-independent ATP-Mg/Pi exchanger that catalyzes the electroneutral exchange of Mg-ATP or free ADP against an hydrogenphosphate and participates in the net transport of adenine nucleotides across the mitochondria inner membrane. The polypeptide is Calcium-independent mitochondrial carrier protein SCaMC-3L (Rattus norvegicus (Rat)).